The sequence spans 411 residues: Putative ion-transport protein YfeO (411 aa).

Helical transmembrane passes span Met-9–Ala-29, Asp-54–Ile-74, Ala-99–Pro-119, Ile-149–Ile-169, Leu-186–Pro-206, Ile-223–Cys-243, Val-258–Leu-278, Leu-296–Ala-316, Gly-322–His-342, Val-343–Val-363, and Leu-386–Ala-406.

The protein belongs to the chloride channel (TC 2.A.49) family.

Its subcellular location is the cell membrane. The chain is Putative ion-transport protein YfeO from Salmonella schwarzengrund (strain CVM19633).